Here is a 745-residue protein sequence, read N- to C-terminus: Polyribonucleotide nucleotidyltransferase (745 aa).

Mg(2+)-binding residues include D487 and D493. The region spanning 554–613 (PSTTTIKIDKDKIRDIIGPGGKVIKEICEISGAKIDISDDGTVSIYASDRDKLKVALDKI) is the KH domain. The S1 motif domain occupies 623–691 (GEIFNGTVMK…NKGKAKLTIK (69 aa)). Positions 691–745 (KNADKDKSSNNTKPKTNAKDNSEPEQRRDSSKKRAWNEDNNAETAEVITERKYFN) are disordered. The segment covering 707 to 719 (NAKDNSEPEQRRD) has biased composition (basic and acidic residues).

Belongs to the polyribonucleotide nucleotidyltransferase family. The cofactor is Mg(2+).

Its subcellular location is the cytoplasm. It catalyses the reaction RNA(n+1) + phosphate = RNA(n) + a ribonucleoside 5'-diphosphate. Its function is as follows. Involved in mRNA degradation. Catalyzes the phosphorolysis of single-stranded polyribonucleotides processively in the 3'- to 5'-direction. This chain is Polyribonucleotide nucleotidyltransferase, found in Rickettsia massiliae (strain Mtu5).